The following is a 315-amino-acid chain: Putative HTH-type transcriptional regulatory protein PF1851 (315 aa).

The 59-residue stretch at 131-189 folds into the HTH cro/C1-type domain; it reads LRELREKYGYSTTELAEMLGVSRKSVQRYEKGEGMVSIDVAIRLEEIFDEPLVKPIDIF. Residues 142 to 161 constitute a DNA-binding region (H-T-H motif); that stretch reads TTELAEMLGVSRKSVQRYEK.

The sequence is that of Putative HTH-type transcriptional regulatory protein PF1851 from Pyrococcus furiosus (strain ATCC 43587 / DSM 3638 / JCM 8422 / Vc1).